Here is a 414-residue protein sequence, read N- to C-terminus: Esterase FrsA (414 aa).

The protein belongs to the FrsA family.

The enzyme catalyses a carboxylic ester + H2O = an alcohol + a carboxylate + H(+). Functionally, catalyzes the hydrolysis of esters. This chain is Esterase FrsA, found in Enterobacter sp. (strain 638).